A 547-amino-acid polypeptide reads, in one-letter code: Chaperonin GroEL (547 aa).

ATP-binding positions include 30 to 33 (TLGP), Lys51, 87 to 91 (DGTTT), Gly415, 479 to 481 (NAA), and Asp495.

The protein belongs to the chaperonin (HSP60) family. As to quaternary structure, forms a cylinder of 14 subunits composed of two heptameric rings stacked back-to-back. Interacts with the co-chaperonin GroES.

The protein localises to the cytoplasm. It catalyses the reaction ATP + H2O + a folded polypeptide = ADP + phosphate + an unfolded polypeptide.. Functionally, together with its co-chaperonin GroES, plays an essential role in assisting protein folding. The GroEL-GroES system forms a nano-cage that allows encapsulation of the non-native substrate proteins and provides a physical environment optimized to promote and accelerate protein folding. The chain is Chaperonin GroEL from Enterobacter sp. (strain 638).